Reading from the N-terminus, the 440-residue chain is MLGWNKHVFFSESRINFRCLLRKKLKKRCPLSARFVLVLLLIVLIFILKMGYKQLIYKLNHPPLRRIDERNDPLFSNGCKNVHLEAQLHPRMNATFVMLARNSDLPGVVSSINSLEKHFNRHFNYPYTFLNDEPFDEKFKETILKLTSANVEFGTLEKDTFGFPGNVDVDAAREAIASQGDRGIMYGDTESYHHMCRFFSGFFYKHPLLLKYQWYWRVEPDVAFTCDISYDPFYYMEENGKIYGYVVALKELEDTVPNLFRYTSAYRRNNNLTSNMWKFFLDAPKKENYDISRKDPTVGLSFSSHLNAMIDSSYSAETSSMEGESYNMCHFWSNFEIANFKFFRNEQYENFFRTMDATGGFWTERWGDAPFHSLAAGLFLSKEQVHYFRDLGYRHSDIHHCGQSLGCNCECIPELSEIESTSGGCVTQWVNLIGDGFLDE.

The Cytoplasmic portion of the chain corresponds to 1–35 (MLGWNKHVFFSESRINFRCLLRKKLKKRCPLSARF). A helical; Signal-anchor for type II membrane protein membrane pass occupies residues 36–56 (VLVLLLIVLIFILKMGYKQLI). Topologically, residues 57–440 (YKLNHPPLRR…NLIGDGFLDE (384 aa)) are lumenal. Glu336 acts as the Nucleophile in catalysis.

It belongs to the glycosyltransferase 15 family.

The protein resides in the cytoplasm. It localises to the nucleus. It is found in the golgi apparatus membrane. Probable mannosyltransferase involved in O-glycosylation of cell wall and secreted proteins. Transfers an alpha-D-mannosyl residue from GDP-mannose into lipid-linked oligosaccharide, forming an alpha-(1-&gt;2)-D-mannosyl-D-mannose linkage. This is O-glycoside alpha-1,2-mannosyltransferase homolog 4 (omh4) from Schizosaccharomyces pombe (strain 972 / ATCC 24843) (Fission yeast).